The chain runs to 81 residues: MKTFLFLFAVLFFWSQPRMHFFFFDEKCSRINGRCTASCLKNEELVALCWKNLKCCVTVQSCGRSKGNQSDEGSGHMGTRG.

The signal sequence occupies residues 1–20 (MKTFLFLFAVLFFWSQPRMH). 3 disulfides stabilise this stretch: C28–C55, C35–C49, and C39–C56. Positions 62–72 (CGRSKGNQSDE) are enriched in polar residues. The tract at residues 62–81 (CGRSKGNQSDEGSGHMGTRG) is disordered.

Belongs to the beta-defensin family. As to expression, only expressed in epididymis (caput, corpus and cauda).

Its subcellular location is the secreted. Functionally, has antibacterial activity. The protein is Beta-defensin 34 (Defb34) of Mus musculus (Mouse).